The following is a 492-amino-acid chain: Serine/threonine-protein kinase 3 (492 aa).

The Protein kinase domain maps to 26–277; it reads FDVLEKLGEG…ATQLLQHPFI (252 aa). ATP contacts are provided by residues 32–40 and Lys55; that span reads LGEGSYGSV. The active-site Proton acceptor is the Asp145. Residue Thr179 is modified to Phosphothreonine; by autocatalysis. 2 coiled-coil regions span residues 286–328 and 443–476; these read LRDL…TMVK and NLDF…AKRQ. The segment covering 297–307 has biased composition (basic and acidic residues); it reads KAKRQQEQQRE. Residues 297–339 form a disordered region; it reads KAKRQQEQQRELEEDDENSEEEVEVDSHTMVKSGSESAGTMRA. Positions 308–320 are enriched in acidic residues; the sequence is LEEDDENSEEEVE. A compositionally biased stretch (polar residues) spans 326–339; it reads MVKSGSESAGTMRA. Residues 438-485 form the SARAH domain; it reads FDFLKNLDFEELQMRLTALDPMMEREIEELRQRYTAKRQPILDAMDAK.

Belongs to the protein kinase superfamily. STE Ser/Thr protein kinase family. STE20 subfamily. Homodimer; mediated via the coiled-coil region. Mg(2+) serves as cofactor.

It is found in the cytoplasm. It localises to the nucleus. It carries out the reaction L-seryl-[protein] + ATP = O-phospho-L-seryl-[protein] + ADP + H(+). The catalysed reaction is L-threonyl-[protein] + ATP = O-phospho-L-threonyl-[protein] + ADP + H(+). With respect to regulation, inhibited by the C-terminal non-catalytic region. Activated by caspase-cleavage. Full activation also requires homodimerization and autophosphorylation of Thr-179. Stress-activated, pro-apoptotic kinase which, following caspase-cleavage, enters the nucleus and induces chromatin condensation followed by internucleosomal DNA fragmentation. Key component of the Hippo signaling pathway which plays a pivotal role in organ size control and tumor suppression by restricting proliferation and promoting apoptosis. The core of this pathway is composed of a kinase cascade wherein stk3/mst2 and stk4/mst1, in complex with its regulatory protein sav1, phosphorylates and activates lats1/2 in complex with its regulatory protein mob1, which in turn phosphorylates and inactivates yap1 oncoprotein and wwtr1/taz. Phosphorylation of yap1 by lats2 inhibits its translocation into the nucleus to regulate cellular genes important for cell proliferation, cell death, and cell migration. This Danio rerio (Zebrafish) protein is Serine/threonine-protein kinase 3 (stk3).